We begin with the raw amino-acid sequence, 283 residues long: E3 ubiquitin-protein ligase SGR9, amyloplastic (283 aa).

An amyloplast-targeting transit peptide spans 1-32 (MEDENTTIIMASLSALSPSHLTNLTHSILSIS). The RING-type; atypical zinc-finger motif lies at 214–255 (CVICKEEMSEGRDVCEMPCQHFFHWKCILPWLSKKNTCPFCR).

Post-translationally, auto-ubiquitinated as part of the enzymatic reaction. As to expression, expressed in seedlings, hypocotyls, roots and stems. Present especially in hypocotyl and inflorescence endodermis, as well as in root cap columella, tissues that act as statocytes.

Its subcellular location is the plastid. It is found in the amyloplast. It carries out the reaction S-ubiquitinyl-[E2 ubiquitin-conjugating enzyme]-L-cysteine + [acceptor protein]-L-lysine = [E2 ubiquitin-conjugating enzyme]-L-cysteine + N(6)-ubiquitinyl-[acceptor protein]-L-lysine.. It participates in protein modification; protein ubiquitination. In terms of biological role, E3 ubiquitin-protein ligase which accepts ubiquitin from an E2 ubiquitin-conjugating enzyme in the form of a thioester and then directly transfers the ubiquitin to targeted substrates. Modulates amyloplast dynamics and sedimentation in statocytes during inflorescence, hypocotyl and root gravitropism, probably by regulating amyloplast interaction with actin filaments (AFs) in endodermal cells. In Arabidopsis thaliana (Mouse-ear cress), this protein is E3 ubiquitin-protein ligase SGR9, amyloplastic (SGR9).